A 93-amino-acid polypeptide reads, in one-letter code: Large ribosomal subunit protein eL42 (93 aa).

Positions 11, 14, 72, and 75 each coordinate Zn(2+). The C4-type zinc finger occupies 11-75; it reads CPHCHSHFEH…TDLKYRCSEC (65 aa).

It belongs to the eukaryotic ribosomal protein eL42 family. As to quaternary structure, part of the 50S ribosomal subunit. Requires Zn(2+) as cofactor.

Its function is as follows. Binds to the 23S rRNA. This is Large ribosomal subunit protein eL42 (rpl44e) from Natronomonas pharaonis (strain ATCC 35678 / DSM 2160 / CIP 103997 / JCM 8858 / NBRC 14720 / NCIMB 2260 / Gabara) (Halobacterium pharaonis).